Reading from the N-terminus, the 79-residue chain is MPKRILEGVVVSDKGDKTVVVKVERTIVHPLLKKIVRRSKKYHAHDESNAYKAGEVARIVECAPKSKLKTWEVLPKASA.

This sequence belongs to the universal ribosomal protein uS17 family. Part of the 30S ribosomal subunit.

Functionally, one of the primary rRNA binding proteins, it binds specifically to the 5'-end of 16S ribosomal RNA. The polypeptide is Small ribosomal subunit protein uS17 (Caulobacter sp. (strain K31)).